Here is a 259-residue protein sequence, read N- to C-terminus: Putative hydro-lyase Rxyl_2409 (259 aa).

The disordered stretch occupies residues 1-24; sequence MGAPGAAEARERIRRGEHAGPTAG. Basic and acidic residues predominate over residues 8–18; the sequence is EARERIRRGEH.

The protein belongs to the D-glutamate cyclase family.

The protein is Putative hydro-lyase Rxyl_2409 of Rubrobacter xylanophilus (strain DSM 9941 / JCM 11954 / NBRC 16129 / PRD-1).